A 467-amino-acid polypeptide reads, in one-letter code: ATP synthase subunit beta (467 aa).

154–161 contacts ATP; that stretch reads GGAGVGKT.

Belongs to the ATPase alpha/beta chains family. In terms of assembly, F-type ATPases have 2 components, CF(1) - the catalytic core - and CF(0) - the membrane proton channel. CF(1) has five subunits: alpha(3), beta(3), gamma(1), delta(1), epsilon(1). CF(0) has three main subunits: a(1), b(2) and c(9-12). The alpha and beta chains form an alternating ring which encloses part of the gamma chain. CF(1) is attached to CF(0) by a central stalk formed by the gamma and epsilon chains, while a peripheral stalk is formed by the delta and b chains.

The protein resides in the cell inner membrane. It catalyses the reaction ATP + H2O + 4 H(+)(in) = ADP + phosphate + 5 H(+)(out). In terms of biological role, produces ATP from ADP in the presence of a proton gradient across the membrane. The catalytic sites are hosted primarily by the beta subunits. In Petrotoga mobilis (strain DSM 10674 / SJ95), this protein is ATP synthase subunit beta.